Reading from the N-terminus, the 823-residue chain is Leucine--tRNA ligase (823 aa).

The 'HIGH' region motif lies at 42–52 (PYPSGTLHMGH). Residues 575–579 (KMSKS) carry the 'KMSKS' region motif. Lysine 578 serves as a coordination point for ATP.

The protein belongs to the class-I aminoacyl-tRNA synthetase family.

Its subcellular location is the cytoplasm. The enzyme catalyses tRNA(Leu) + L-leucine + ATP = L-leucyl-tRNA(Leu) + AMP + diphosphate. The polypeptide is Leucine--tRNA ligase (Legionella pneumophila (strain Paris)).